Reading from the N-terminus, the 100-residue chain is Omega-hexatoxin-Asp2b (100 aa).

The N-terminal stretch at 1–23 (MKFSKLSITLAVILTQAVFVLCG) is a signal peptide. Positions 24 to 55 (MKNEDFMEKGLESNELHDAIKKPVNSGKPDTE) are excised as a propeptide. Disulfide bonds link C60/C73, C66/C79, and C72/C84.

The protein belongs to the neurotoxin 15 family. 02 (omega-actx) subfamily. As to expression, expressed by the venom gland.

Its subcellular location is the secreted. Functionally, potent inhibitor of insect, but not mammalian, voltage-gated calcium channels (Cav). The polypeptide is Omega-hexatoxin-Asp2b (Atrax sp. (strain Illawarra) (Funnel-web spider)).